We begin with the raw amino-acid sequence, 298 residues long: Ethanolamine ammonia-lyase small subunit (298 aa).

3 residues coordinate adenosylcob(III)alamin: Val210, Glu231, and Cys261.

Belongs to the EutC family. As to quaternary structure, the basic unit is a heterodimer which dimerizes to form tetramers. The heterotetramers trimerize; 6 large subunits form a core ring with 6 small subunits projecting outwards. Requires adenosylcob(III)alamin as cofactor.

The protein localises to the bacterial microcompartment. It catalyses the reaction ethanolamine = acetaldehyde + NH4(+). Its pathway is amine and polyamine degradation; ethanolamine degradation. Functionally, catalyzes the deamination of various vicinal amino-alcohols to oxo compounds. Allows this organism to utilize ethanolamine as the sole source of nitrogen and carbon in the presence of external vitamin B12. This Salmonella typhi protein is Ethanolamine ammonia-lyase small subunit.